The chain runs to 164 residues: ATP synthase subunit b 1 (164 aa).

Residues 8–28 (AETWVAVGFAILMVVFVYFGV) traverse the membrane as a helical segment.

Belongs to the ATPase B chain family. F-type ATPases have 2 components, F(1) - the catalytic core - and F(0) - the membrane proton channel. F(1) has five subunits: alpha(3), beta(3), gamma(1), delta(1), epsilon(1). F(0) has three main subunits: a(1), b(2) and c(10-14). The alpha and beta chains form an alternating ring which encloses part of the gamma chain. F(1) is attached to F(0) by a central stalk formed by the gamma and epsilon chains, while a peripheral stalk is formed by the delta and b chains.

Its subcellular location is the cell inner membrane. Its function is as follows. F(1)F(0) ATP synthase produces ATP from ADP in the presence of a proton or sodium gradient. F-type ATPases consist of two structural domains, F(1) containing the extramembraneous catalytic core and F(0) containing the membrane proton channel, linked together by a central stalk and a peripheral stalk. During catalysis, ATP synthesis in the catalytic domain of F(1) is coupled via a rotary mechanism of the central stalk subunits to proton translocation. Component of the F(0) channel, it forms part of the peripheral stalk, linking F(1) to F(0). In Rhodopseudomonas palustris (strain BisA53), this protein is ATP synthase subunit b 1.